We begin with the raw amino-acid sequence, 142 residues long: UPF0102 protein Bcep18194_A3391 (142 aa).

Residues 1-27 (MCHAAPARPGDGRGLPRAGDNFSGAAR) are disordered.

Belongs to the UPF0102 family.

The chain is UPF0102 protein Bcep18194_A3391 from Burkholderia lata (strain ATCC 17760 / DSM 23089 / LMG 22485 / NCIMB 9086 / R18194 / 383).